Consider the following 280-residue polypeptide: HCLS1-associated protein X-1 (280 aa).

S2 bears the N-acetylserine mark. The tract at residues 2-45 (SVFDLFRGFFGFPGPRSHRDPFFGGMTRDDDDDDDDDDEAEEDR) is required for localization in mitochondria. Disordered stretches follow at residues 12-70 (GFPG…SFSP) and 100-263 (TLPS…SALD). The span at 30-43 (DDDDDDDDDDEAEE) shows a compositional bias: acidic residues. Residues 115 to 280 (TPGERLREGQ…LLLGRWFRSR (166 aa)) are involved in HCLS1 binding. Composition is skewed to basic and acidic residues over residues 116-125 (PGERLREGQT) and 134-154 (PDSH…KPES). The interval 176 to 207 (VSPHSRAKEDKDLDSQVSQEGLGPLLQPQPKS) is involved in CASP9 binding. Positions 177 to 248 (SPHSRAKEDK…TTVTHQEAHD (72 aa)) are involved in GNA13 binding. The tract at residues 184-280 (EDKDLDSQVS…LLLGRWFRSR (97 aa)) is required for localization in sarcoplasmic reticulum. Positions 185-280 (DKDLDSQVSQ…LLLGRWFRSR (96 aa)) are involved in PKD2 binding. A phosphoserine mark is found at S190 and S193. The segment at 204 to 226 (QPKSYFKSISVTKITKPDGTVEE) is involved in PLN binding. The interval 204–246 (QPKSYFKSISVTKITKPDGTVEERRTVVDSEGRRETTVTHQEA) is involved in ATP2A2 binding. The tract at residues 211–280 (SISVTKITKP…LLLGRWFRSR (70 aa)) is mediates interaction with UCP3. A compositionally biased stretch (basic and acidic residues) spans 218–256 (TKPDGTVEERRTVVDSEGRRETTVTHQEAHDSSRSDPDS). The interval 271-280 (LLLGRWFRSR) is required for ITGB6 binding.

This sequence belongs to the HAX1 family. In terms of assembly, interacts with ABCB1, ABCB4 and ABCB11. Directly associates with HCLS1/HS1, through binding to its N-terminal region. Interacts with CTTN. Interacts with PKD2. Interacts with GNA13. Interacts with CASP9. Interacts with ITGB6. Interacts with PLN and ATP2A2; these interactions are inhibited by calcium. Interacts with GRB7. Interacts (via C-terminus) with XIAP/BIRC4 (via BIR 2 domain and BIR 3 domain) and this interaction blocks ubiquitination of XIAP/BIRC4. Interacts with TPC2. Interacts with KCNC3. Interacts with XPO1. Interacts with RNF217. Interacts with UCP3; the interaction is direct and calcium-dependent. Interacts with MAPRE2; this interaction regulates cell migration in keratinocytes. As to expression, ubiquitous, with highest levels in kidney and liver (at protein level).

The protein resides in the mitochondrion matrix. It is found in the endoplasmic reticulum. Its subcellular location is the nucleus membrane. It localises to the cytoplasmic vesicle. The protein localises to the cytoplasm. The protein resides in the cell cortex. It is found in the cell membrane. Its subcellular location is the sarcoplasmic reticulum. It localises to the P-body. The protein localises to the nucleus. In terms of biological role, recruits the Arp2/3 complex to the cell cortex and regulates reorganization of the cortical actin cytoskeleton via its interaction with KCNC3 and the Arp2/3 complex. Slows down the rate of inactivation of KCNC3 channels. Promotes GNA13-mediated cell migration. Involved in the clathrin-mediated endocytosis pathway. May be involved in internalization of ABC transporters such as ABCB11. May inhibit CASP9 and CASP3. Promotes cell survival. May regulate intracellular calcium pools. The sequence is that of HCLS1-associated protein X-1 (Hax1) from Mus musculus (Mouse).